The following is a 148-amino-acid chain: Receptor activity-modifying protein 1 (148 aa).

Residues 1–26 (MARALCRLPRRGLWLLLAHHLFMTTA) form the signal peptide. Intrachain disulfides connect Cys-27/Cys-82, Cys-40/Cys-72, and Cys-57/Cys-104. Residues 27–118 (CQEANYGALL…RAVRDPPGSI (92 aa)) lie on the Extracellular side of the membrane. The chain crosses the membrane as a helical span at residues 119–140 (LYPFIVVPITVTLLVTALVVWQ). Residues 141 to 148 (SKRTEGIV) are Cytoplasmic-facing.

This sequence belongs to the RAMP family. As to quaternary structure, heterodimer of CALCRL and RAMP1; the interaction induces allosteric modulation of CALCRL function and CGRP1/CALCA and CGRP2/CALCB ligand specificity. Heterodimer of CALCR and RAMP1; interaction forms the AMYR1 receptor complex for amylin/IAPP and CGRP1/CALCA ligands. As to expression, expressed in many tissues including the uterus, bladder, brain, pancreas and gastro-intestinal tract.

It is found in the cell membrane. Its function is as follows. Accessory protein that interacts with and modulates the function of G-protein coupled receptors including calcitonin gene-related peptide type 1 receptor (CALCRL) and calcitonin receptor (CALCR). Required for the transport of CALCRL to the plasma membrane. Together with CALCRL, form the receptor complex for the calcitonin gene-related peptides CGRP1/CALCA and CGRP2/CALCB. Together with CALCR, form the AMYR1 receptor complex for amylin/IAPP and CGRP1/CALCA. This is Receptor activity-modifying protein 1 from Homo sapiens (Human).